Here is a 298-residue protein sequence, read N- to C-terminus: GTP cyclohydrolase FolE2 (298 aa).

The protein belongs to the GTP cyclohydrolase IV family.

It carries out the reaction GTP + H2O = 7,8-dihydroneopterin 3'-triphosphate + formate + H(+). The protein operates within cofactor biosynthesis; 7,8-dihydroneopterin triphosphate biosynthesis; 7,8-dihydroneopterin triphosphate from GTP: step 1/1. Functionally, converts GTP to 7,8-dihydroneopterin triphosphate. The protein is GTP cyclohydrolase FolE2 of Neisseria meningitidis serogroup B (strain ATCC BAA-335 / MC58).